Consider the following 470-residue polypeptide: Amino-acid permease RocC (470 aa).

12 helical membrane-spanning segments follow: residues 18–38 (FMIA…GFTI), 44–64 (LGAI…MLCL), 90–110 (GFMI…LELT), 119–139 (WLPS…IFLI), 159–179 (VAAI…LIDF), 196–216 (GLFP…NFSF), 243–263 (VIWR…AILP), 281–301 (IGIP…ILSV), 338–358 (ALLI…MAAE), 360–380 (VYLW…MSIC), 409–429 (LVPI…IFIP), and 433–453 (IGLY…HLSI).

The protein belongs to the amino acid-polyamine-organocation (APC) superfamily.

The protein localises to the cell membrane. In terms of biological role, putative transport protein involved in arginine degradative pathway. Probably transports arginine or ornithine. This Bacillus subtilis (strain 168) protein is Amino-acid permease RocC (rocC).